The sequence spans 318 residues: Acetyl-coenzyme A carboxylase carboxyl transferase subunit alpha (318 aa).

The CoA carboxyltransferase C-terminal domain maps to 38-292 (KLEKRLAKLE…NKTITKSLHA (255 aa)).

This sequence belongs to the AccA family. As to quaternary structure, acetyl-CoA carboxylase is a heterohexamer composed of biotin carboxyl carrier protein (AccB), biotin carboxylase (AccC) and two subunits each of ACCase subunit alpha (AccA) and ACCase subunit beta (AccD).

It is found in the cytoplasm. The catalysed reaction is N(6)-carboxybiotinyl-L-lysyl-[protein] + acetyl-CoA = N(6)-biotinyl-L-lysyl-[protein] + malonyl-CoA. Its pathway is lipid metabolism; malonyl-CoA biosynthesis; malonyl-CoA from acetyl-CoA: step 1/1. Component of the acetyl coenzyme A carboxylase (ACC) complex. First, biotin carboxylase catalyzes the carboxylation of biotin on its carrier protein (BCCP) and then the CO(2) group is transferred by the carboxyltransferase to acetyl-CoA to form malonyl-CoA. The polypeptide is Acetyl-coenzyme A carboxylase carboxyl transferase subunit alpha (Listeria monocytogenes serotype 4b (strain CLIP80459)).